A 594-amino-acid chain; its full sequence is Gamma-terpinene synthase, chloroplastic (594 aa).

The N-terminal 44 residues, M1–S44, are a transit peptide targeting the chloroplast. Mn(2+)-binding residues include D347 and D351. Residues D347–D351 carry the DDXXD motif motif. Homodimerization regions lie at residues Y353–L359 and E425–P462. Mn(2+) is bound by residues D491 and E499.

The protein belongs to the terpene synthase family. In terms of assembly, homodimer. It depends on Mn(2+) as a cofactor. The cofactor is Mg(2+). Expressed in peltate glandular trichomes.

It is found in the plastid. Its subcellular location is the chloroplast. It carries out the reaction (2E)-geranyl diphosphate = gamma-terpinene + diphosphate. The enzyme catalyses (2E)-geranyl diphosphate = alpha-terpinene + diphosphate. It functions in the pathway secondary metabolite biosynthesis; terpenoid biosynthesis. Functionally, involved in the biosynthesis of phenolic monoterpenes natural products thymol and carvacrol which have a broad range of biological activities acting as antimicrobial compounds, insecticides, antioxidants and pharmaceutical agents. Monoterpene synthase which catalyzes the conversion of geranyl diphosphate (GPP) to gamma-terpinene and the minor products alpha-thujene, alpha-terpinene, myrcene, sabinene, (+)-R-limonene, alpha-pinene and alpha-phellandrene. The sequence is that of Gamma-terpinene synthase, chloroplastic from Origanum vulgare (Wild marjoram).